A 226-amino-acid polypeptide reads, in one-letter code: PKHD-type hydroxylase MADE_1018490 (226 aa).

One can recognise a Fe2OG dioxygenase domain in the interval 77-177; the sequence is RIFPPCFNRY…RIAAITWIQS (101 aa). Residues His-95, Asp-97, and His-158 each coordinate Fe cation. Arg-168 contributes to the 2-oxoglutarate binding site.

Requires Fe(2+) as cofactor. The cofactor is L-ascorbate.

This is PKHD-type hydroxylase MADE_1018490 from Alteromonas mediterranea (strain DSM 17117 / CIP 110805 / LMG 28347 / Deep ecotype).